A 112-amino-acid chain; its full sequence is UPF0060 membrane protein Daro_2632 (112 aa).

Helical transmembrane passes span 7–27, 34–54, 59–79, and 89–109; these read VLGL…LPWL, PVWL…LLTL, AGRI…IWLW, and WDLV…LQPA.

The protein belongs to the UPF0060 family.

The protein resides in the cell inner membrane. This is UPF0060 membrane protein Daro_2632 from Dechloromonas aromatica (strain RCB).